The chain runs to 3080 residues: Protein PIEZO homolog (3080 aa).

The next 6 helical transmembrane spans lie at 28 to 48 (YIYF…SLIL), 57 to 77 (PIIT…VNVV), 86 to 106 (LSVN…WIVF), 113 to 133 (VIVF…LVYP), 204 to 224 (YPSI…LLLA), and 232 to 252 (VMLK…LFVY). Asparagine 276 carries an N-linked (GlcNAc...) asparagine glycan. The helical transmembrane segment at 285 to 305 (WPLVIGYITVLLLYISTCILF) threads the bilayer. 2 N-linked (GlcNAc...) asparagine glycosylation sites follow: asparagine 312 and asparagine 339. The next 2 membrane-spanning stretches (helical) occupy residues 362-382 (ILVV…LASG) and 396-416 (VIYI…IFNI). Residue asparagine 434 is glycosylated (N-linked (GlcNAc...) asparagine). Residues 438–458 (WLYIGVQIVVSLTLSLYCFYS) form a helical membrane-spanning segment. The disordered stretch occupies residues 469-548 (KKDQQSQQSQ…GGGIIRPRKP (80 aa)). The span at 473-505 (QSQQSQPQPQQQQQQQQSSQNNQIQQSPLQYQQ) shows a compositional bias: low complexity. Polar residues predominate over residues 512 to 532 (ISNKSLPSSPMSTKSTTVHIQ). N-linked (GlcNAc...) asparagine glycans are attached at residues asparagine 514, asparagine 567, and asparagine 606. The next 3 membrane-spanning stretches (helical) occupy residues 672-692 (GLTS…VFVI), 700-720 (FWMC…IWQL), and 740-760 (YGSP…FSII). Asparagine 795 is a glycosylation site (N-linked (GlcNAc...) asparagine). 3 helical membrane passes run 827-847 (FCYL…INIV), 849-869 (MATV…SIHI), and 872-892 (FWII…IMQF). A glycan (N-linked (GlcNAc...) asparagine) is linked at asparagine 918. Residues 928-948 (LFGCSSILVVCVFQLTVFFSI) form a helical membrane-spanning segment. Asparagine 992 carries N-linked (GlcNAc...) asparagine glycosylation. Helical transmembrane passes span 1036–1056 (FAIS…MIVI) and 1067–1087 (IGSF…AALL). An N-linked (GlcNAc...) asparagine glycan is attached at asparagine 1109. The interval 1158 to 1185 (QQQRKLEEHEEEYEEEEDQFGNKKNNDK) is disordered. A compositionally biased stretch (acidic residues) spans 1166 to 1176 (HEEEYEEEEDQ). 3 N-linked (GlcNAc...) asparagine glycosylation sites follow: asparagine 1191, asparagine 1240, and asparagine 1251. Residues 1199–1253 (DDGNNNNNNNNNNNNNNNNNNNNNNNNNNNNNNNNNNNNNNNQSNNENNENNNNS) are disordered. The span at 1202-1252 (NNNNNNNNNNNNNNNNNNNNNNNNNNNNNNNNNNNNNNNQSNNENNENNNN) shows a compositional bias: low complexity. Helical transmembrane passes span 1281–1301 (VLAF…LIII), 1316–1336 (IYVS…ILVV), and 1360–1380 (LLLL…VLFF). Asparagine 1424 and asparagine 1440 each carry an N-linked (GlcNAc...) asparagine glycan. 2 helical membrane passes run 1472–1492 (VILI…SCFY) and 1519–1539 (IYNW…ILYF). N-linked (GlcNAc...) asparagine glycans are attached at residues asparagine 1559 and asparagine 1589. A helical transmembrane segment spans residues 1619–1639 (IETGPLSISTISDVIIMVLLA). Positions 1704 to 1714 (RINRRKNRHNH) are enriched in basic residues. Positions 1704–1812 (RINRRKNRHN…NPLSNSSSTV (109 aa)) are disordered. Residues 1715–1742 (YYNNNPNNNYNNNNNNNNSNSSNSNNNN) are compositionally biased toward low complexity. 8 N-linked (GlcNAc...) asparagine glycosylation sites follow: asparagine 1731, asparagine 1734, asparagine 1763, asparagine 1768, asparagine 1771, asparagine 1779, asparagine 1807, and asparagine 1864. The segment covering 1762–1782 (KNTTNQNATNSTYSPFANSTM) has biased composition (polar residues). Low complexity predominate over residues 1789–1812 (NNNNNNNNNNNFNNNPLSNSSSTV). Disordered regions lie at residues 1873–1899 (LQQE…SSKE) and 1958–2032 (SQLL…TSSS). The segment covering 1958–2021 (SQLLQQQQQQ…NNNNNNNNNN (64 aa)) has biased composition (low complexity). A glycan (N-linked (GlcNAc...) asparagine) is linked at asparagine 2027. 2 helical membrane-spanning segments follow: residues 2078-2098 (IANG…AVFL) and 2112-2132 (FWRF…VFQI). N-linked (GlcNAc...) asparagine glycosylation occurs at asparagine 2148. Residues 2199-2219 (VFGLYIIDGHFISGAFWDLAI) traverse the membrane as a helical segment. The tract at residues 2277-2367 (LNNSPISLNS…NNNNNNNNNN (91 aa)) is disordered. A glycan (N-linked (GlcNAc...) asparagine) is linked at asparagine 2285. Low complexity predominate over residues 2288–2367 (NNNNNNNNNN…NNNNNNNNNN (80 aa)). The next 2 helical transmembrane spans lie at 2427-2447 (IIIY…WLAI) and 2457-2477 (YYMP…IFPQ). A glycan (N-linked (GlcNAc...) asparagine) is linked at asparagine 2478. The next 4 helical transmembrane spans lie at 2500–2520 (YIVI…IYLY), 2530–2550 (QIVL…DLIV), 2553–2573 (FSFG…IYLY), and 2671–2691 (FVTG…PLII). N-linked (GlcNAc...) asparagine glycosylation is found at asparagine 2762, asparagine 2790, asparagine 2837, asparagine 2840, asparagine 2848, asparagine 2858, asparagine 2908, asparagine 2913, and asparagine 2935. The disordered stretch occupies residues 2835-2863 (QSNNSNNSNNPNENSSSGSDDNNNNSNNN). Residues 2836-2863 (SNNSNNSNNPNENSSSGSDDNNNNSNNN) are compositionally biased toward low complexity. The helical transmembrane segment at 2955–2975 (ITSTLVSAGIIGLYVSVVLSV) threads the bilayer. The segment at 3054–3080 (PTINSTLNNQNNQNNNNNNNNNHEKIN) is disordered. Residue asparagine 3057 is glycosylated (N-linked (GlcNAc...) asparagine). The segment covering 3061–3074 (NNQNNQNNNNNNNN) has biased composition (low complexity).

The protein belongs to the PIEZO (TC 1.A.75) family.

Its subcellular location is the membrane. This chain is Protein PIEZO homolog, found in Dictyostelium discoideum (Social amoeba).